Here is a 69-residue protein sequence, read N- to C-terminus: MSSSVSEECTPAKKKYDACFNDWYANKFLKGDLHNRDCDELFAEYKSCLLKALKTKKIDPLLEAARKED.

In terms of domain architecture, CHCH spans 6–56 (SEECTPAKKKYDACFNDWYANKFLKGDLHNRDCDELFAEYKSCLLKALKTK). Short sequence motifs (cx9C motif) lie at residues 9–19 (CTPAKKKYDAC) and 38–48 (CDELFAEYKSC). 2 cysteine pairs are disulfide-bonded: C9–C48 and C19–C38.

Belongs to the TRIAP1/MDM35 family.

This is an uncharacterized protein from Schizosaccharomyces pombe (strain 972 / ATCC 24843) (Fission yeast).